The sequence spans 516 residues: uncharacterized protein (516 aa).

PFTB repeat units follow at residues Arg-45 to Asp-86 and Asp-401 to Glu-443.

This is an uncharacterized protein from Sinorhizobium fredii (strain NBRC 101917 / NGR234).